Consider the following 883-residue polypeptide: Phosphoenolpyruvate carboxylase (883 aa).

Residues His138 and Lys546 contribute to the active site.

It belongs to the PEPCase type 1 family. The cofactor is Mg(2+).

The enzyme catalyses oxaloacetate + phosphate = phosphoenolpyruvate + hydrogencarbonate. Its function is as follows. Forms oxaloacetate, a four-carbon dicarboxylic acid source for the tricarboxylic acid cycle. In Enterobacter sp. (strain 638), this protein is Phosphoenolpyruvate carboxylase.